The following is a 100-amino-acid chain: Integration host factor subunit beta (100 aa).

Belongs to the bacterial histone-like protein family. In terms of assembly, heterodimer of an alpha and a beta chain.

Its function is as follows. This protein is one of the two subunits of integration host factor, a specific DNA-binding protein that functions in genetic recombination as well as in transcriptional and translational control. In Rhodospirillum rubrum (strain ATCC 11170 / ATH 1.1.1 / DSM 467 / LMG 4362 / NCIMB 8255 / S1), this protein is Integration host factor subunit beta.